A 148-amino-acid polypeptide reads, in one-letter code: Snaclec crotocetin (148 aa).

The first 23 residues, 1 to 23, serve as a signal peptide directing secretion; sequence MGRLVFVSFGLLVVFLSLTGTGA. Cystine bridges form between cysteine 27/cysteine 38, cysteine 55/cysteine 144, and cysteine 121/cysteine 136. In terms of domain architecture, C-type lectin spans 34–145; that stretch reads YEGHCYKVFK…CSKTHKVVCK (112 aa).

The protein belongs to the snaclec family. As to quaternary structure, heterodimer; disulfide-linked. Expressed by the venom gland.

Its subcellular location is the secreted. In terms of biological role, interferes with one step of hemostasis (modulation of platelet aggregation, or coagulation cascade, for example). The protein is Snaclec crotocetin of Crotalus durissus terrificus (South American rattlesnake).